The sequence spans 295 residues: Glucose-1-phosphate thymidylyltransferase (295 aa).

The Mg(2+) site is built by aspartate 111 and aspartate 226.

The protein belongs to the glucose-1-phosphate thymidylyltransferase family. In terms of assembly, homotetramer. Requires Mg(2+) as cofactor.

It carries out the reaction dTTP + alpha-D-glucose 1-phosphate + H(+) = dTDP-alpha-D-glucose + diphosphate. Its pathway is carbohydrate biosynthesis; dTDP-L-rhamnose biosynthesis. It functions in the pathway bacterial outer membrane biogenesis; LPS O-antigen biosynthesis. Catalyzes the formation of dTDP-glucose, from dTTP and glucose 1-phosphate, as well as its pyrophosphorolysis. The protein is Glucose-1-phosphate thymidylyltransferase (rmlA) of Xanthomonas campestris pv. campestris (strain B100).